The following is a 543-amino-acid chain: CTP synthase (543 aa).

The segment at 1 to 265 (MARYIFITGG…DDEVLAAFGI (265 aa)) is amidoligase domain. Serine 13 provides a ligand contact to CTP. Serine 13 is a binding site for UTP. An ATP-binding site is contributed by 14 to 19 (SLGKGL). Residue tyrosine 54 coordinates L-glutamine. An ATP-binding site is contributed by aspartate 71. Mg(2+) contacts are provided by aspartate 71 and glutamate 139. Residues 146-148 (DIE), 186-191 (KTKPTQ), and lysine 222 contribute to the CTP site. UTP-binding positions include 186-191 (KTKPTQ) and lysine 222. 238–240 (RDV) contributes to the ATP binding site. Residues 291-542 (TIAIVGKYTG…IQAAMVQSRL (252 aa)) form the Glutamine amidotransferase type-1 domain. Glycine 353 contacts L-glutamine. The active-site Nucleophile; for glutamine hydrolysis is cysteine 380. Residues 381–384 (FGMQ), glutamate 404, and arginine 470 each bind L-glutamine. Residues histidine 515 and glutamate 517 contribute to the active site.

The protein belongs to the CTP synthase family. Homotetramer.

It carries out the reaction UTP + L-glutamine + ATP + H2O = CTP + L-glutamate + ADP + phosphate + 2 H(+). The catalysed reaction is L-glutamine + H2O = L-glutamate + NH4(+). The enzyme catalyses UTP + NH4(+) + ATP = CTP + ADP + phosphate + 2 H(+). It participates in pyrimidine metabolism; CTP biosynthesis via de novo pathway; CTP from UDP: step 2/2. With respect to regulation, allosterically activated by GTP, when glutamine is the substrate; GTP has no effect on the reaction when ammonia is the substrate. The allosteric effector GTP functions by stabilizing the protein conformation that binds the tetrahedral intermediate(s) formed during glutamine hydrolysis. Inhibited by the product CTP, via allosteric rather than competitive inhibition. Functionally, catalyzes the ATP-dependent amination of UTP to CTP with either L-glutamine or ammonia as the source of nitrogen. Regulates intracellular CTP levels through interactions with the four ribonucleotide triphosphates. The sequence is that of CTP synthase from Bradyrhizobium diazoefficiens (strain JCM 10833 / BCRC 13528 / IAM 13628 / NBRC 14792 / USDA 110).